The chain runs to 69 residues: Putative membrane protein insertion efficiency factor (69 aa).

This sequence belongs to the UPF0161 family.

It is found in the cell membrane. Could be involved in insertion of integral membrane proteins into the membrane. In Thermoanaerobacter pseudethanolicus (strain ATCC 33223 / 39E) (Clostridium thermohydrosulfuricum), this protein is Putative membrane protein insertion efficiency factor.